We begin with the raw amino-acid sequence, 39 residues long: MERNTNPNRQPVELNRTSLYLGLLLVAVLGILFSSYFFN.

Residues 18–38 form a helical membrane-spanning segment; the sequence is SLYLGLLLVAVLGILFSSYFF.

The protein belongs to the PsbL family. As to quaternary structure, PSII is composed of 1 copy each of membrane proteins PsbA, PsbB, PsbC, PsbD, PsbE, PsbF, PsbH, PsbI, PsbJ, PsbK, PsbL, PsbM, PsbT, PsbX, PsbY, PsbZ, Psb30/Ycf12, peripheral proteins PsbO, CyanoQ (PsbQ), PsbU, PsbV and a large number of cofactors. It forms dimeric complexes.

It localises to the cellular thylakoid membrane. Functionally, one of the components of the core complex of photosystem II (PSII). PSII is a light-driven water:plastoquinone oxidoreductase that uses light energy to abstract electrons from H(2)O, generating O(2) and a proton gradient subsequently used for ATP formation. It consists of a core antenna complex that captures photons, and an electron transfer chain that converts photonic excitation into a charge separation. This subunit is found at the monomer-monomer interface and is required for correct PSII assembly and/or dimerization. The chain is Photosystem II reaction center protein L from Rippkaea orientalis (strain PCC 8801 / RF-1) (Cyanothece sp. (strain PCC 8801)).